Consider the following 743-residue polypeptide: Phosphoribosylformylglycinamidine synthase subunit PurL (743 aa).

H54 is a catalytic residue. Residues Y57 and K96 each coordinate ATP. A Mg(2+)-binding site is contributed by E98. Residues S99 to H102 and R121 each bind substrate. The Proton acceptor role is filled by H100. D122 serves as a coordination point for Mg(2+). Q245 serves as a coordination point for substrate. Mg(2+) is bound at residue D273. E317–Q319 contacts substrate. The ATP site is built by D501 and G538. N539 contacts Mg(2+). Substrate is bound at residue S541.

It belongs to the FGAMS family. Monomer. Part of the FGAM synthase complex composed of 1 PurL, 1 PurQ and 2 PurS subunits.

Its subcellular location is the cytoplasm. It carries out the reaction N(2)-formyl-N(1)-(5-phospho-beta-D-ribosyl)glycinamide + L-glutamine + ATP + H2O = 2-formamido-N(1)-(5-O-phospho-beta-D-ribosyl)acetamidine + L-glutamate + ADP + phosphate + H(+). The protein operates within purine metabolism; IMP biosynthesis via de novo pathway; 5-amino-1-(5-phospho-D-ribosyl)imidazole from N(2)-formyl-N(1)-(5-phospho-D-ribosyl)glycinamide: step 1/2. Functionally, part of the phosphoribosylformylglycinamidine synthase complex involved in the purines biosynthetic pathway. Catalyzes the ATP-dependent conversion of formylglycinamide ribonucleotide (FGAR) and glutamine to yield formylglycinamidine ribonucleotide (FGAM) and glutamate. The FGAM synthase complex is composed of three subunits. PurQ produces an ammonia molecule by converting glutamine to glutamate. PurL transfers the ammonia molecule to FGAR to form FGAM in an ATP-dependent manner. PurS interacts with PurQ and PurL and is thought to assist in the transfer of the ammonia molecule from PurQ to PurL. This is Phosphoribosylformylglycinamidine synthase subunit PurL from Halalkalibacterium halodurans (strain ATCC BAA-125 / DSM 18197 / FERM 7344 / JCM 9153 / C-125) (Bacillus halodurans).